A 455-amino-acid polypeptide reads, in one-letter code: tRNA modification GTPase MnmE (455 aa).

(6S)-5-formyl-5,6,7,8-tetrahydrofolate is bound by residues Arg-26, Glu-86, and Arg-125. A TrmE-type G domain is found at 222-376; that stretch reads GLKTAIIGRP…VEEKINQIFF (155 aa). Asn-232 provides a ligand contact to K(+). GTP-binding positions include 232–237, 251–257, and 276–279; these read NVGKSS, TDIAGTT, and DTAG. Ser-236 contacts Mg(2+). Positions 251, 253, and 256 each coordinate K(+). Thr-257 provides a ligand contact to Mg(2+). Lys-455 serves as a coordination point for (6S)-5-formyl-5,6,7,8-tetrahydrofolate.

It belongs to the TRAFAC class TrmE-Era-EngA-EngB-Septin-like GTPase superfamily. TrmE GTPase family. As to quaternary structure, homodimer. Heterotetramer of two MnmE and two MnmG subunits. K(+) is required as a cofactor.

The protein resides in the cytoplasm. In terms of biological role, exhibits a very high intrinsic GTPase hydrolysis rate. Involved in the addition of a carboxymethylaminomethyl (cmnm) group at the wobble position (U34) of certain tRNAs, forming tRNA-cmnm(5)s(2)U34. The polypeptide is tRNA modification GTPase MnmE (Lactococcus lactis subsp. cremoris (strain MG1363)).